We begin with the raw amino-acid sequence, 238 residues long: Tritrans,polycis-undecaprenyl-diphosphate synthase (geranylgeranyl-diphosphate specific) (238 aa).

Asp18 is an active-site residue. Mg(2+) is bound at residue Asp18. Residues 19–22 and 64–66 contribute to the substrate site; these read GNRR and STE. Asn67 (proton acceptor) is an active-site residue. Substrate is bound by residues Arg70, Arg187, and 193–195; that span reads RLS. Mg(2+) is bound at residue Glu206.

It belongs to the UPP synthase family. As to quaternary structure, homodimer. Requires Mg(2+) as cofactor.

The catalysed reaction is geranylgeranyl diphosphate + 7 isopentenyl diphosphate = tri-trans,hepta-cis-undecaprenyl diphosphate + 7 diphosphate. In terms of biological role, catalyzes the sequential condensation of isopentenyl diphosphate (IPP) with geranylgeranyl diphosphate (GGPP) to yield (2Z,6Z,10Z,14Z,18Z,22Z,26Z,30E,34E,38E)-undecaprenyl diphosphate (tritrans,heptacis-UPP). It is probably the precursor of glycosyl carrier lipids. This Pyrobaculum aerophilum (strain ATCC 51768 / DSM 7523 / JCM 9630 / CIP 104966 / NBRC 100827 / IM2) protein is Tritrans,polycis-undecaprenyl-diphosphate synthase (geranylgeranyl-diphosphate specific).